The chain runs to 191 residues: Peptidyl-tRNA hydrolase (191 aa).

Tyr-15 contributes to the tRNA binding site. His-20 acts as the Proton acceptor in catalysis. Positions 66, 68, and 114 each coordinate tRNA.

This sequence belongs to the PTH family. Monomer.

The protein resides in the cytoplasm. It carries out the reaction an N-acyl-L-alpha-aminoacyl-tRNA + H2O = an N-acyl-L-amino acid + a tRNA + H(+). Its function is as follows. Hydrolyzes ribosome-free peptidyl-tRNAs (with 1 or more amino acids incorporated), which drop off the ribosome during protein synthesis, or as a result of ribosome stalling. Functionally, catalyzes the release of premature peptidyl moieties from peptidyl-tRNA molecules trapped in stalled 50S ribosomal subunits, and thus maintains levels of free tRNAs and 50S ribosomes. This chain is Peptidyl-tRNA hydrolase, found in Streptococcus agalactiae serotype Ia (strain ATCC 27591 / A909 / CDC SS700).